Reading from the N-terminus, the 931-residue chain is Protocadherin gamma-B2 (931 aa).

Residues 1 to 30 form the signal peptide; it reads MKASSGRCGLVRWLQVLLPFLLSLFPGALP. Cadherin domains lie at 31–133, 134–242, 243–347, 348–452, 453–562, and 570–675; these read VQIR…TPLF, KQTK…PPVF, SQDV…APEV, IVTS…APVF, QQTS…APRV, and DGSA…LPDL. Residues 31 to 691 lie on the Extracellular side of the membrane; it reads VQIRYSIPEE…SDPQAKLQFY (661 aa). 2 N-linked (GlcNAc...) asparagine glycosylation sites follow: asparagine 419 and asparagine 545. A helical membrane pass occupies residues 692–712; it reads LVVALALISVLFFLAVILAIS. Residues 713 to 931 are Cytoplasmic-facing; the sequence is LRLRLSSRSD…KKKSGKKEKK (219 aa). 2 disordered regions span residues 814–840 and 901–931; these read DWRFSQAQRPGTSGSQNGDDTGTWPNN and ATLTNAAGKRDGKAPAGGNGNKKKSGKKEKK. Over residues 815–840 the composition is skewed to polar residues; the sequence is WRFSQAQRPGTSGSQNGDDTGTWPNN. Over residues 921–931 the composition is skewed to basic residues; the sequence is NKKKSGKKEKK.

The protein localises to the cell membrane. Functionally, potential calcium-dependent cell-adhesion protein. May be involved in the establishment and maintenance of specific neuronal connections in the brain. The chain is Protocadherin gamma-B2 (PCDHGB2) from Homo sapiens (Human).